The chain runs to 372 residues: Spermidine/putrescine import ATP-binding protein PotA (372 aa).

The region spanning 11-241 is the ABC transporter domain; the sequence is IELRSIKKSY…PANLFVARFI (231 aa). 43 to 50 contacts ATP; sequence GPSGCGKT.

It belongs to the ABC transporter superfamily. Spermidine/putrescine importer (TC 3.A.1.11.1) family. In terms of assembly, the complex is composed of two ATP-binding proteins (PotA), two transmembrane proteins (PotB and PotC) and a solute-binding protein (PotD).

It localises to the cell inner membrane. It catalyses the reaction ATP + H2O + polyamine-[polyamine-binding protein]Side 1 = ADP + phosphate + polyamineSide 2 + [polyamine-binding protein]Side 1.. Its function is as follows. Part of the ABC transporter complex PotABCD involved in spermidine/putrescine import. Responsible for energy coupling to the transport system. This Haemophilus influenzae (strain ATCC 51907 / DSM 11121 / KW20 / Rd) protein is Spermidine/putrescine import ATP-binding protein PotA.